The following is a 209-amino-acid chain: Ribonuclease HII (209 aa).

The RNase H type-2 domain maps to 19-209 (CTIVGVDEVG…ASGITKLYNK (191 aa)). The a divalent metal cation site is built by Asp-25, Glu-26, and Asp-118.

It belongs to the RNase HII family. Mn(2+) serves as cofactor. Requires Mg(2+) as cofactor.

The protein resides in the cytoplasm. It carries out the reaction Endonucleolytic cleavage to 5'-phosphomonoester.. Its function is as follows. Endonuclease that specifically degrades the RNA of RNA-DNA hybrids. The sequence is that of Ribonuclease HII from Ehrlichia chaffeensis (strain ATCC CRL-10679 / Arkansas).